We begin with the raw amino-acid sequence, 134 residues long: uncharacterized protein (134 aa).

3 helical membrane passes run 21-41 (FSTTLFEIVIFTFIMITLYLI), 52-72 (LVLLLIAIYVIVLQLFFTPYE), and 95-115 (IVMALDVLAGLMLILAVVYII).

It localises to the host membrane. This is an uncharacterized protein from Acidianus two-tailed virus (ATV).